Here is a 590-residue protein sequence, read N- to C-terminus: Glutathione S-transferase T3 (590 aa).

A GST N-terminal domain is found at 1–82; sequence MKLKVYADRM…YLSSAYPSVV (82 aa). Residues 11-12, 40-41, 53-54, and 66-67 contribute to the glutathione site; these read SQ, QL, KV, and ES. Positions 89–232 constitute a GST C-terminal domain; sequence DLSKRARIHS…KDRCQKQREM (144 aa). The Myb-like domain occupies 265–336; sequence DRRKHRRKWS…HCKQRWSKLN (72 aa). The interval 402–427 is disordered; it reads SKGGGSSKRTKLNNGDRVYSSSSNPE.

The protein belongs to the GST superfamily. Theta family.

Its subcellular location is the nucleus. The catalysed reaction is RX + glutathione = an S-substituted glutathione + a halide anion + H(+). In terms of biological role, may be involved in the conjugation of reduced glutathione to a wide number of exogenous and endogenous hydrophobic electrophiles and have a detoxification role against certain herbicides. The chain is Glutathione S-transferase T3 (GSTT3) from Arabidopsis thaliana (Mouse-ear cress).